The chain runs to 131 residues: Small ribosomal subunit protein bS6 (131 aa).

A disordered region spans residues 96–131 (ITEASPMAKAKDERDSRRGPAGDRSYDEANAEEIAE). A compositionally biased stretch (basic and acidic residues) spans 104–122 (KAKDERDSRRGPAGDRSYD).

This sequence belongs to the bacterial ribosomal protein bS6 family.

Functionally, binds together with bS18 to 16S ribosomal RNA. This is Small ribosomal subunit protein bS6 from Shewanella oneidensis (strain ATCC 700550 / JCM 31522 / CIP 106686 / LMG 19005 / NCIMB 14063 / MR-1).